A 309-amino-acid chain; its full sequence is Homoserine O-succinyltransferase (309 aa).

Catalysis depends on Cys142, which acts as the Acyl-thioester intermediate. Substrate-binding residues include Lys163 and Ser192. His235 (proton acceptor) is an active-site residue. Glu237 is an active-site residue. Position 249 (Arg249) interacts with substrate.

The protein belongs to the MetA family.

The protein resides in the cytoplasm. It catalyses the reaction L-homoserine + succinyl-CoA = O-succinyl-L-homoserine + CoA. The protein operates within amino-acid biosynthesis; L-methionine biosynthesis via de novo pathway; O-succinyl-L-homoserine from L-homoserine: step 1/1. In terms of biological role, transfers a succinyl group from succinyl-CoA to L-homoserine, forming succinyl-L-homoserine. This is Homoserine O-succinyltransferase from Erwinia tasmaniensis (strain DSM 17950 / CFBP 7177 / CIP 109463 / NCPPB 4357 / Et1/99).